Here is a 753-residue protein sequence, read N- to C-terminus: MEQRGWTLQCTAFAFFCVWCALNSVKAKRQFVNEWAAEIPGGQEAASAIAEELGYDLLGQIGSLENHYLFKHKSHPRRSRRSALHITKRLSDDDRVTWAEQQYEKERSKRSVQKDSALDLFNDPMWNQQWYLQDTRMTAALPKLDLHVIPVWEKGITGKGVVITVLDDGLEWNHTDIYANYDPEASYDFNDNDHDPFPRYDLTNENKHGTRCAGEIAMQANNHKCGVGVAYNSKVGGIRMLDGIVTDAIEASSIGFNPGHVDIYSASWGPNDDGKTVEGPGRLAQKAFEYGVKQGRQGKGSIFVWASGNGGRQGDNCDCDGYTDSIYTISISSASQQGLSPWYAEKCSSTLATSYSSGDYTDQRITSADLHNDCTETHTGTSASAPLAAGIFALALEANPNLTWRDMQHLVVWTSEYDPLASNPGWKKNGAGLMVNSRFGFGLLNAKALVDLADPRTWRNVPEKKECVVKDNNFEPRALKANGEVIVEIPTRACEGQENAIKSLEHVQFEATIEYSRRGDLHVTLTSAVGTSTVLLAERERDTSPNGFKNWDFMSVHTWGENPVGTWTLKITDMSGRMQNEGRIVNWKLILHGTSSQPEHMKQPRVYTSYNTVQNDRRGVEKMVNVVEKRPTQKSLNGNLLVPKNSSSSNVEGRRDEQVQGTPSKAMLRLLQSAFSKNALSKQSPKKSPSAKLSIPYESFYEALEKLNKPSKLEGSEDSLYSDYVDVFYNTKPYKHRDDRLLQALMDILNEEN.

The signal sequence occupies residues 1–27; the sequence is MEQRGWTLQCTAFAFFCVWCALNSVKA. Positions 28-110 are excised as a propeptide; that stretch reads KRQFVNEWAA…QQYEKERSKR (83 aa). Residues 129–450 form the Peptidase S8 domain; sequence QWYLQDTRMT…FGLLNAKALV (322 aa). Active-site charge relay system residues include Asp167 and His208. 2 disulfides stabilise this stretch: Cys225-Cys374 and Cys317-Cys347. The active-site Charge relay system is Ser382. Residue Asn401 is glycosylated (N-linked (GlcNAc...) asparagine). Residues 460 to 597 form the P/Homo B domain; sequence NVPEKKECVV…KLILHGTSSQ (138 aa). A disulfide bridge connects residues Cys467 and Cys494. Residues 633-651 show a composition bias toward polar residues; it reads QKSLNGNLLVPKNSSSSNV. The interval 633–663 is disordered; the sequence is QKSLNGNLLVPKNSSSSNVEGRRDEQVQGTP. A glycan (N-linked (GlcNAc...) asparagine) is linked at Asn645.

This sequence belongs to the peptidase S8 family. Furin subfamily. Ca(2+) is required as a cofactor.

It localises to the cytoplasmic vesicle. It is found in the secretory vesicle. It carries out the reaction Release of protein hormones, neuropeptides and renin from their precursors, generally by hydrolysis of -Lys-Arg-|- bonds.. Involved in the processing of hormone and other protein precursors at sites comprised of pairs of basic amino acid residues. Substrates include POMC, renin, enkephalin, dynorphin, somatostatin, insulin and AGRP. This Mus musculus (Mouse) protein is Neuroendocrine convertase 1 (Pcsk1).